A 247-amino-acid polypeptide reads, in one-letter code: Probable transcriptional regulatory protein Asuc_1803 (247 aa).

This sequence belongs to the TACO1 family.

The protein resides in the cytoplasm. In Actinobacillus succinogenes (strain ATCC 55618 / DSM 22257 / CCUG 43843 / 130Z), this protein is Probable transcriptional regulatory protein Asuc_1803.